A 223-amino-acid chain; its full sequence is N-terminal Xaa-Pro-Lys N-methyltransferase 1 (223 aa).

N-acetylmethionine is present on methionine 1. Threonine 2 is modified (N-acetylthreonine; in N-terminal Xaa-Pro-Lys N-methyltransferase 1, N-terminally processed). S-adenosyl-L-methionine contacts are provided by residues glycine 69, arginine 74, 91–93 (DVT), 119–120 (LQ), and glutamine 135.

Belongs to the methyltransferase superfamily. NTM1 family.

The protein localises to the nucleus. It carries out the reaction N-terminal L-alanyl-L-prolyl-L-lysyl-[protein] + 3 S-adenosyl-L-methionine = N-terminal N,N,N-trimethyl-L-alanyl-L-prolyl-L-lysyl-[protein] + 3 S-adenosyl-L-homocysteine + 3 H(+). It catalyses the reaction N-terminal L-seryl-L-prolyl-L-lysyl-[protein] + 3 S-adenosyl-L-methionine = N-terminal N,N,N-trimethyl-L-seryl-L-prolyl-L-lysyl-[protein] + 3 S-adenosyl-L-homocysteine + 3 H(+). The enzyme catalyses N-terminal L-prolyl-L-prolyl-L-lysyl-[protein] + 2 S-adenosyl-L-methionine = N-terminal N,N-dimethyl-L-prolyl-L-prolyl-L-lysyl-[protein] + 2 S-adenosyl-L-homocysteine + 2 H(+). Distributive alpha-N-methyltransferase that methylates the N-terminus of target proteins containing the N-terminal motif [Ala/Gly/Pro/Ser]-Pro-Lys when the initiator Met is cleaved. Specifically catalyzes mono-, di- or tri-methylation of the exposed alpha-amino group of the Ala, Gly or Ser residue in the [Ala/Gly/Ser]-Pro-Lys motif and mono- or di-methylation of Pro in the Pro-Pro-Lys motif. Some of the substrates may be primed by NTMT2-mediated monomethylation. Catalyzes the trimethylation of the N-terminal Gly in CENPA (after removal of Met-1). Responsible for the N-terminal methylation of KLHL31, MYL2, MYL3, RB1, RCC1, RPL23A and SET. Required during mitosis for normal bipolar spindle formation and chromosome segregation via its action on RCC1. The sequence is that of N-terminal Xaa-Pro-Lys N-methyltransferase 1 (Ntmt1) from Mus musculus (Mouse).